Consider the following 116-residue polypeptide: Large ribosomal subunit protein uL18 (116 aa).

It belongs to the universal ribosomal protein uL18 family. In terms of assembly, part of the 50S ribosomal subunit; part of the 5S rRNA/L5/L18/L25 subcomplex. Contacts the 5S and 23S rRNAs.

Its function is as follows. This is one of the proteins that bind and probably mediate the attachment of the 5S RNA into the large ribosomal subunit, where it forms part of the central protuberance. This chain is Large ribosomal subunit protein uL18, found in Shewanella oneidensis (strain ATCC 700550 / JCM 31522 / CIP 106686 / LMG 19005 / NCIMB 14063 / MR-1).